The sequence spans 156 residues: Movement protein P17 (156 aa).

Positions 38–54 (AEDAEEEAIAAQEELEF) are homodimerization. 2 disordered regions span residues 55–80 (PEDE…EVSP) and 131–156 (AKYH…IKRG). An RNA-binding region spans residues 57-156 (DEAQARHSCL…RAAPKLIKRG (100 aa)). A phosphoserine mark is found at Ser-71, Ser-79, Ser-137, and Ser-140. Basic residues predominate over residues 144 to 156 (KLRRAAPKLIKRG).

The protein belongs to the polerovirus movement protein family. As to quaternary structure, homodimer. Heterodimer with movement protein P3a. Expressed as a nonphosphorylated 20kDa form and a phosphorylated 22kDa form. Phosphorylated by a host PKC-related kinase. Serine phosphorylation is required for plamodesma targeting.

It localises to the host cell junction. It is found in the host plasmodesma. The protein resides in the host mitochondrion outer membrane. The protein localises to the host Golgi apparatus. Its subcellular location is the host chloroplast envelope. Functionally, together with movement protein P3a, facilitates long-distance movement of virions in host. Transports viral genome to neighboring plant cells directly through plasmosdesmata, without any budding. The movement protein allows efficient cell to cell propagation, by bypassing the host cell wall barrier. Binds ssRNA. This is Movement protein P17 from Solanum tuberosum (Potato).